The chain runs to 170 residues: Endoribonuclease YbeY (170 aa).

Histidine 128, histidine 132, and histidine 138 together coordinate Zn(2+).

The protein belongs to the endoribonuclease YbeY family. Zn(2+) is required as a cofactor.

The protein resides in the cytoplasm. Single strand-specific metallo-endoribonuclease involved in late-stage 70S ribosome quality control and in maturation of the 3' terminus of the 16S rRNA. This Ruegeria sp. (strain TM1040) (Silicibacter sp.) protein is Endoribonuclease YbeY.